Here is a 154-residue protein sequence, read N- to C-terminus: 6,7-dimethyl-8-ribityllumazine synthase (154 aa).

5-amino-6-(D-ribitylamino)uracil-binding positions include Phe24, Ser56–Glu58, and Ala80–Val82. Glu85–Thr86 is a (2S)-2-hydroxy-3-oxobutyl phosphate binding site. His88 acts as the Proton donor in catalysis. Phe113 contributes to the 5-amino-6-(D-ribitylamino)uracil binding site. Arg127 contacts (2S)-2-hydroxy-3-oxobutyl phosphate.

It belongs to the DMRL synthase family.

It carries out the reaction (2S)-2-hydroxy-3-oxobutyl phosphate + 5-amino-6-(D-ribitylamino)uracil = 6,7-dimethyl-8-(1-D-ribityl)lumazine + phosphate + 2 H2O + H(+). The protein operates within cofactor biosynthesis; riboflavin biosynthesis; riboflavin from 2-hydroxy-3-oxobutyl phosphate and 5-amino-6-(D-ribitylamino)uracil: step 1/2. Catalyzes the formation of 6,7-dimethyl-8-ribityllumazine by condensation of 5-amino-6-(D-ribitylamino)uracil with 3,4-dihydroxy-2-butanone 4-phosphate. This is the penultimate step in the biosynthesis of riboflavin. The sequence is that of 6,7-dimethyl-8-ribityllumazine synthase from Thermococcus gammatolerans (strain DSM 15229 / JCM 11827 / EJ3).